Consider the following 238-residue polypeptide: Endonuclease V (238 aa).

Mg(2+)-binding residues include aspartate 46 and aspartate 116.

The protein belongs to the endonuclease V family. It depends on Mg(2+) as a cofactor.

It is found in the cytoplasm. It carries out the reaction Endonucleolytic cleavage at apurinic or apyrimidinic sites to products with a 5'-phosphate.. Functionally, DNA repair enzyme involved in the repair of deaminated bases. Selectively cleaves double-stranded DNA at the second phosphodiester bond 3' to a deoxyinosine leaving behind the intact lesion on the nicked DNA. In Bacillus subtilis (strain 168), this protein is Endonuclease V.